The chain runs to 445 residues: Tryptophan 5-hydroxylase 1 (445 aa).

The 76-residue stretch at 19–94 folds into the ACT domain; it reads AIIFSLKNEV…SIVSMNPTEH (76 aa). The residue at position 58 (Ser58) is a Phosphoserine; by PKA. L-tryptophan contacts are provided by Tyr236, Arg258, and Thr266. The Fe cation site is built by His273, His278, and Glu318. Residues Ser337 and Ile367 each contribute to the L-tryptophan site.

This sequence belongs to the biopterin-dependent aromatic amino acid hydroxylase family. In terms of assembly, homotetramer. Fe(2+) serves as cofactor.

It catalyses the reaction (6R)-L-erythro-5,6,7,8-tetrahydrobiopterin + L-tryptophan + O2 = 5-hydroxy-L-tryptophan + (4aS,6R)-4a-hydroxy-L-erythro-5,6,7,8-tetrahydrobiopterin. It functions in the pathway aromatic compound metabolism; serotonin biosynthesis; serotonin from L-tryptophan: step 1/2. In terms of biological role, oxidizes L-tryptophan to 5-hydroxy-l-tryptophan in the rate-determining step of serotonin biosynthesis. The protein is Tryptophan 5-hydroxylase 1 (TPH1) of Gallus gallus (Chicken).